The sequence spans 406 residues: MQAWTKPDIPVVPGPARRLRLYDTASGGLVEVPPGPDGPARMYVCGITPYDATHMGHAATYVTFDLVNRLWRDAGYTVHYTQNITDVDDPLLERATATGVEWTDLAEREIQLFRDDMTALRVIPPQEYVGVVESIPLVVERIAELQQAGAVYDVDGDLYFAVKADPAFGGISSYDADTMRTLFGERGGDPDREGKRDPLDCLVWQQERPGEPAWDSPFGRGRPGWHIECSAIALQYLGMTIDVQGGGSDLIFPHHEMSASEAQCATGQHPFARAYVHQAMVGLDGEKMSKSKGNLVLVSRERQAGSDPMAIRLALLAHHYRTDWFWTDSELLDAQERLDVWRGAITRGTGPDGPAAVDALRAALTNDLDTTAALAAIDQWAETNGDDPEASALVALAVDALLGIKL.

A Zn(2+)-binding site is contributed by C45. Residues 45-48 (CGIT), T60, and 83-85 (NIT) each bind L-cysteinyl-5'-AMP. The 'HIGH' region signature appears at 47-57 (ITPYDATHMGH). The 'ERGGDP' region signature appears at 185 to 190 (ERGGDP). W225 contacts L-cysteinyl-5'-AMP. C229 is a Zn(2+) binding site. 247–249 (GSD) lines the L-cysteinyl-5'-AMP pocket. Position 254 (H254) interacts with Zn(2+). V281 provides a ligand contact to L-cysteinyl-5'-AMP. Residues 287–291 (KMSKS) carry the 'KMSKS' region motif.

Belongs to the class-I aminoacyl-tRNA synthetase family. MshC subfamily. In terms of assembly, monomer. Zn(2+) is required as a cofactor.

It catalyses the reaction 1D-myo-inositol 2-amino-2-deoxy-alpha-D-glucopyranoside + L-cysteine + ATP = 1D-myo-inositol 2-(L-cysteinylamino)-2-deoxy-alpha-D-glucopyranoside + AMP + diphosphate + H(+). Functionally, catalyzes the ATP-dependent condensation of GlcN-Ins and L-cysteine to form L-Cys-GlcN-Ins. The protein is L-cysteine:1D-myo-inositol 2-amino-2-deoxy-alpha-D-glucopyranoside ligase of Kribbella flavida (strain DSM 17836 / JCM 10339 / NBRC 14399).